Here is a 352-residue protein sequence, read N- to C-terminus: Cobalt transport protein NhlF (352 aa).

8 helical membrane-spanning segments follow: residues 23–43, 46–66, 95–115, 131–151, 206–226, 230–250, 290–310, and 323–343; these read LASV…LYLG, GNPA…VLGV, VGFF…LVVA, EIGG…VAGL, PVGL…LLTL, AATG…LFAA, VIGL…LPMF, and FEFL…GALL.

It belongs to the NiCoT transporter (TC 2.A.52) family.

It is found in the cell membrane. Its activity is regulated as follows. Cobalt uptake is inhibited by uncouplers (CCCP and 3,5-di-tert-butyl-4-hydroxybenzylidenemalononitrile) and by the addition of excess nickel. Its function is as follows. Mediates energy-dependent uptake of cobalt ions into the cell. Can also transport nickel ions, but cobalt is the preferred substrate. This chain is Cobalt transport protein NhlF (nhlF), found in Rhodococcus rhodochrous.